A 415-amino-acid chain; its full sequence is Multidrug resistance protein MdtA (415 aa).

Residues methionine 1–alanine 21 form the signal peptide. The span at aspartate 31 to serine 46 shows a compositional bias: polar residues. Disordered regions lie at residues aspartate 31–alanine 56 and glutamate 392–serine 415. The segment covering proline 399 to serine 415 has biased composition (basic and acidic residues).

Belongs to the membrane fusion protein (MFP) (TC 8.A.1) family. As to quaternary structure, part of a tripartite efflux system composed of MdtA, MdtB and MdtC.

The protein resides in the cell inner membrane. The MdtABC tripartite complex confers resistance against novobiocin and deoxycholate. The chain is Multidrug resistance protein MdtA from Escherichia coli O6:K15:H31 (strain 536 / UPEC).